The sequence spans 404 residues: Argininosuccinate synthase (404 aa).

Residues A10–S18 and A37 contribute to the ATP site. 2 residues coordinate L-citrulline: Y90 and S95. An ATP-binding site is contributed by G120. T122, N126, and D127 together coordinate L-aspartate. N126 contacts L-citrulline. The L-citrulline site is built by R130, S181, S190, E266, and Y278.

The protein belongs to the argininosuccinate synthase family. Type 1 subfamily. As to quaternary structure, homotetramer.

The protein resides in the cytoplasm. The enzyme catalyses L-citrulline + L-aspartate + ATP = 2-(N(omega)-L-arginino)succinate + AMP + diphosphate + H(+). It functions in the pathway amino-acid biosynthesis; L-arginine biosynthesis; L-arginine from L-ornithine and carbamoyl phosphate: step 2/3. This Erythrobacter litoralis (strain HTCC2594) protein is Argininosuccinate synthase.